The following is a 185-amino-acid chain: MISVNDFKTGLTISVDNAIWKVIDFQHVKPGKGSAFVRSKLRNLRTGAIQEKTFRAGEKVEPAMIENRRMQYLYADGDNHVFMDNESFEQTELSSDYLKEELNYLKEGMEVQIQTYEGETIGVELPKTVELTVTETEPGIKGDTATGATKSATVETGYTLNVPLFVNEGDVLIINTGDGSYISRG.

Belongs to the elongation factor P family.

It localises to the cytoplasm. It participates in protein biosynthesis; polypeptide chain elongation. Its function is as follows. Involved in peptide bond synthesis. Stimulates efficient translation and peptide-bond synthesis on native or reconstituted 70S ribosomes in vitro. Probably functions indirectly by altering the affinity of the ribosome for aminoacyl-tRNA, thus increasing their reactivity as acceptors for peptidyl transferase. The protein is Elongation factor P of Staphylococcus aureus (strain Mu3 / ATCC 700698).